The following is a 179-amino-acid chain: CMT1A duplicated region transcript 4 protein homolog (179 aa).

The segment covering 1–15 (MISRPESSLSGLESS) has biased composition (low complexity). A disordered region spans residues 1-20 (MISRPESSLSGLESSQEVQK).

The protein is CMT1A duplicated region transcript 4 protein homolog (Cdrt4) of Mus musculus (Mouse).